The primary structure comprises 535 residues: 2-isopropylmalate synthase (535 aa).

The 262-residue stretch at 13–274 (VLIFDTTLRD…YFNPFLGRPP (262 aa)) folds into the Pyruvate carboxyltransferase domain. The Mn(2+) site is built by Asp-22, His-213, His-215, and Asn-249. A regulatory domain region spans residues 414 to 535 (QLEFVQVSCG…LEQRALHPQA (122 aa)).

The protein belongs to the alpha-IPM synthase/homocitrate synthase family. LeuA type 1 subfamily. As to quaternary structure, homodimer. Requires Mn(2+) as cofactor.

The protein localises to the cytoplasm. It carries out the reaction 3-methyl-2-oxobutanoate + acetyl-CoA + H2O = (2S)-2-isopropylmalate + CoA + H(+). It functions in the pathway amino-acid biosynthesis; L-leucine biosynthesis; L-leucine from 3-methyl-2-oxobutanoate: step 1/4. Catalyzes the condensation of the acetyl group of acetyl-CoA with 3-methyl-2-oxobutanoate (2-ketoisovalerate) to form 3-carboxy-3-hydroxy-4-methylpentanoate (2-isopropylmalate). The protein is 2-isopropylmalate synthase of Thermosynechococcus vestitus (strain NIES-2133 / IAM M-273 / BP-1).